A 492-amino-acid chain; its full sequence is Protein KOKOPELLI (492 aa).

Disordered regions lie at residues Val-218–Met-354 and Ser-394–Gly-426. The segment covering Gln-256–Ala-270 has biased composition (acidic residues). A compositionally biased stretch (low complexity) spans Ser-287–Glu-305. A compositionally biased stretch (polar residues) spans Glu-317–Pro-336. Composition is skewed to basic and acidic residues over residues His-337–Lys-348 and Lys-403–Ser-412.

As to expression, mostly expressed in pollen and open flowers and, to a lower extent, in closed flowers.

Its function is as follows. Positively regulates reproductive function by facilitating male gametophyte formation and double fertilization. This Arabidopsis thaliana (Mouse-ear cress) protein is Protein KOKOPELLI.